Reading from the N-terminus, the 406-residue chain is Enoyl-[acyl-carrier-protein] reductase [NADH] (406 aa).

NAD(+) is bound by residues 48-53 (GASTGF), 74-75 (FE), 111-112 (DA), and 140-141 (IA). Y226 provides a ligand contact to substrate. The Proton donor role is filled by Y236. NAD(+)-binding positions include K245 and 275-277 (LVT).

It belongs to the TER reductase family. Monomer.

The catalysed reaction is a 2,3-saturated acyl-[ACP] + NAD(+) = a (2E)-enoyl-[ACP] + NADH + H(+). Its pathway is lipid metabolism; fatty acid biosynthesis. Functionally, involved in the final reduction of the elongation cycle of fatty acid synthesis (FAS II). Catalyzes the reduction of a carbon-carbon double bond in an enoyl moiety that is covalently linked to an acyl carrier protein (ACP). The chain is Enoyl-[acyl-carrier-protein] reductase [NADH] from Coxiella burnetii (strain CbuK_Q154) (Coxiella burnetii (strain Q154)).